Reading from the N-terminus, the 162-residue chain is SsrA-binding protein (162 aa).

Residues 140–162 (DKRETAAKRDWSRQKSRLMKDHG) are disordered.

Belongs to the SmpB family.

Its subcellular location is the cytoplasm. Its function is as follows. Required for rescue of stalled ribosomes mediated by trans-translation. Binds to transfer-messenger RNA (tmRNA), required for stable association of tmRNA with ribosomes. tmRNA and SmpB together mimic tRNA shape, replacing the anticodon stem-loop with SmpB. tmRNA is encoded by the ssrA gene; the 2 termini fold to resemble tRNA(Ala) and it encodes a 'tag peptide', a short internal open reading frame. During trans-translation Ala-aminoacylated tmRNA acts like a tRNA, entering the A-site of stalled ribosomes, displacing the stalled mRNA. The ribosome then switches to translate the ORF on the tmRNA; the nascent peptide is terminated with the 'tag peptide' encoded by the tmRNA and targeted for degradation. The ribosome is freed to recommence translation, which seems to be the essential function of trans-translation. In Roseobacter denitrificans (strain ATCC 33942 / OCh 114) (Erythrobacter sp. (strain OCh 114)), this protein is SsrA-binding protein.